The sequence spans 303 residues: Probable 5-dehydro-4-deoxyglucarate dehydratase (303 aa).

Belongs to the DapA family.

The catalysed reaction is 5-dehydro-4-deoxy-D-glucarate + H(+) = 2,5-dioxopentanoate + CO2 + H2O. The protein operates within carbohydrate acid metabolism; D-glucarate degradation; 2,5-dioxopentanoate from D-glucarate: step 2/2. The polypeptide is Probable 5-dehydro-4-deoxyglucarate dehydratase (Paracidovorax citrulli (strain AAC00-1) (Acidovorax citrulli)).